A 360-amino-acid chain; its full sequence is MDNLIKQLQMSVSSENVDRNFIEKCIEMNPCRRMLHEVLLERKDILRSRMNLVALYDTDEQSSEIEEILAQFENPTFPLEEVNTEKDEEWQPLERKYLDGINRIKEDTIMKQIQLDKDMEKALTNSEEVLRNHRDFRPIDEKDFSNIRQSISKRFEHSKNNIRGEAATKILVLRREIEQQGRKRRNFDKNTTDILQNWFHDHRQNPYPSDQEKAELAKQCNIKISQVNNWFGNQRIRTKQQALRMQEDERERAASMANEAQAIQNSLNSSTVASSSNMSTSGLINIPLVNPTMQSMVIPAVQPGLLGNPNAFLHQPHYFTAGGQMSLNDNGNGQQFFTDYETFGLAQSDTESFNQMGYLG.

A PBC-A region spans residues 1 to 82; that stretch reads MDNLIKQLQM…ENPTFPLEEV (82 aa). One can recognise a PBC domain in the interval 1 to 179; the sequence is MDNLIKQLQM…ILVLRREIEQ (179 aa). Residues 85-179 are PBC-B; sequence EKDEEWQPLE…ILVLRREIEQ (95 aa). The homeobox DNA-binding region spans 180-242; it reads QGRKRRNFDK…NQRIRTKQQA (63 aa).

Belongs to the TALE/PBX homeobox family. As to quaternary structure, forms a heterodimer with homeobox unc-62. Interacts with pqm-1.

The protein localises to the nucleus. Functionally, probable transcription regulator which binds to DNA, repressing genes involved in longevity and stress, while activating genes involved in reproduction, such as the vitellogenins. Associates with homeobox unc-62 to regulate gene expression, including repression of genes involved in innate immunity. Required for intestinal expression of vitellogenin genes. Negatively modulates longevity, probably independently of effects on vitellogenesis. Involved in lipid homeostasis, contributing to the reallocation of intestinal lipids to the germline and to the formation of the cuticle. Associates with transcriptional regulator pqm-1 at the daf-16 associated element within the promoters of stress-responsive genes to regulate expression. The chain is Homeobox protein ceh-60 from Caenorhabditis elegans.